The primary structure comprises 244 residues: Sugar fermentation stimulation protein homolog (244 aa).

Belongs to the SfsA family.

This is Sugar fermentation stimulation protein homolog from Dinoroseobacter shibae (strain DSM 16493 / NCIMB 14021 / DFL 12).